Consider the following 334-residue polypeptide: MTKPIVFSGAQPSGELTIGNYMGALRQWVNMQDDYHCIYCIVDQHAITVRQDPQQLRKATLDTLALYLACGIDPQKSTIFVQSHVPEHAQLGWALNCYTYFGELSRMTQFKDKSARYAENINAGLFDYPVLMAADILLYQTNQVPVGEDQKQHLELSRDIAQRFNAIYGDIFKVPEPFIPKSGARVMSLLEPTKKMSKSDDNRNNVIGLLEDPKSVVKKIKRAVTDSDEPPVVRYDLKEKAGVSNLLDILSAVTGKTIPELEQHFEGKMYGHLKGEVAEAVSGMLIDLQERYHRFRNDEAFLNQVMKDGAEKASARASQTLKAVYEAIGFVAKP.

ATP is bound by residues Gln-11–Ser-13 and Gly-19–Asn-20. A 'HIGH' region motif is present at residues Pro-12 to Asn-20. Asp-135 contacts L-tryptophan. Residues Gly-147–Asp-149, Val-186, and Lys-195–Ser-199 contribute to the ATP site. Residues Lys-195–Ser-199 carry the 'KMSKS' region motif.

Belongs to the class-I aminoacyl-tRNA synthetase family. As to quaternary structure, homodimer.

The protein resides in the cytoplasm. The enzyme catalyses tRNA(Trp) + L-tryptophan + ATP = L-tryptophyl-tRNA(Trp) + AMP + diphosphate + H(+). Functionally, catalyzes the attachment of tryptophan to tRNA(Trp). The sequence is that of Tryptophan--tRNA ligase from Klebsiella aerogenes (Enterobacter aerogenes).